Consider the following 20-residue polypeptide: Cupiennin-6f (20 aa).

As to expression, expressed by the venom gland.

The protein localises to the secreted. The sequence is that of Cupiennin-6f from Cupiennius salei (American wandering spider).